Reading from the N-terminus, the 770-residue chain is Transducin-like enhancer protein 1 (770 aa).

A q domain region spans residues 1–131 (MFPQSRHPTP…IIGQQQLQAQ (131 aa)). 2 disordered regions span residues 128 to 157 (LQAQ…GIPP) and 176 to 346 (HLAI…PAME). The segment at 132 to 199 (HLSHGHGPPV…RHRDRESGTS (68 aa)) is GP domain. The segment covering 146 to 157 (HPSGLQPPGIPP) has biased composition (low complexity). Basic and acidic residues-rich tracts occupy residues 178-196 (AIKD…DRES) and 209-244 (RSTD…KSDD). Residues 200–266 (NSLLVPDSLR…SPHASPTHSP (67 aa)) form a ccN domain region. The Nuclear localization signal motif lies at 225 to 228 (KKRK). Phosphoserine; by CK2 is present on Ser-237. The segment covering 255-264 (PSSPHASPTH) has biased composition (low complexity). Phosphoserine; by CDK1 is present on residues Ser-257, Ser-261, and Ser-265. Over residues 265–281 (SPRENGIDKNRLLKKDA) the composition is skewed to basic and acidic residues. The interval 267 to 450 (RENGIDKNRL…GGKPAYSFHV (184 aa)) is SP domain. Over residues 282 to 297 (SGSPASTASSGSSSSL) the composition is skewed to low complexity. A Phosphoserine modification is found at Ser-284. Residues 298-308 (KSKEVSLHEKA) show a composition bias toward basic and acidic residues. 6 WD repeats span residues 470-501 (GIPR…HVYT), 528-558 (NRDN…SIWD), 572-602 (SSAP…AVWD), 614-644 (GHTD…RSWD), 696-726 (LHES…NAWR), and 737-767 (KESS…TVYE).

It belongs to the WD repeat Groucho/TLE family. Homooligomer and heterooligomer with other family members. Binds RUNX1, RUNX3, FOXA2, KDM6A, UTY, histone H3, HESX1, ESRRG and the NF-kappa-B subunit RELA. Interacts with HES1 (via WRPW motif). Binds TCF7, LEF1, TCF7L1 and TCF7L2. Interacts with SIX3. Interacts with EFNB1. Interacts with TLE4. Interacts with FOXG1/BF-1; the interaction is inhibited by TLE6/GRG6. Phosphorylated, probably by CDK1. The degree of phosphorylation varies throughout the cell cycle, and is highest at the G2/M transition. Becomes hyperphosphorylated in response to cell differentiation and interaction with HES1 or RUNX1. In terms of processing, ubiquitinated by XIAP/BIRC4. In terms of tissue distribution, highly expressed in liver and lung. Detected at slightly lower levels in heart, brain, kidney and testis. Detected in fetal and adult stomach and small intestine, in adult ileum, duodenum and colon. Expressed in bone marrow-derived macrophages. As to expression, most abundant at the base of the crypts of Lieberkuhn in the small intestine.

It is found in the nucleus. The protein localises to the cytoplasm. In terms of biological role, transcriptional corepressor that binds to a number of transcription factors. Inhibits NF-kappa-B-regulated gene expression. Inhibits the transcriptional activation mediated by FOXA2, and by CTNNB1 and TCF family members in Wnt signaling. Enhances FOXG1/BF-1- and HES1-mediated transcriptional repression. The effects of full-length TLE family members may be modulated by association with dominant-negative AES. Unusual function as coactivator for ESRRG. The sequence is that of Transducin-like enhancer protein 1 (Tle1) from Mus musculus (Mouse).